A 156-amino-acid polypeptide reads, in one-letter code: Small ribosomal subunit protein uS7 (156 aa).

As to quaternary structure, part of the 30S ribosomal subunit. Contacts proteins S9 and S11. Binds to the C-terminus of IF3 and to the C-terminus of Era.

Its function is as follows. One of the primary rRNA binding proteins, it binds directly to 3'-end of the 16S rRNA where it nucleates assembly of the head domain of the 30S subunit. Is located at the subunit interface close to the decoding center. Binds mRNA and the E site tRNA blocking its exit path in the ribosome. This blockage implies that this section of the ribosome must be able to move to release the deacetylated tRNA. This chain is Small ribosomal subunit protein uS7 (rpsG), found in Thermus thermophilus (strain ATCC 27634 / DSM 579 / HB8).